The chain runs to 307 residues: Metapyrocatechase (307 aa).

2 consecutive VOC domains span residues Arg-7–Asp-122 and Arg-150–Gly-269. Fe cation is bound by residues His-153, His-214, and Glu-265.

Belongs to the extradiol ring-cleavage dioxygenase family. As to quaternary structure, homotetramer. Fe(2+) serves as cofactor.

It catalyses the reaction catechol + O2 = (2Z,4E)-2-hydroxy-6-oxohexa-2,4-dienoate + H(+). It functions in the pathway xenobiotic degradation; toluene degradation. This is Metapyrocatechase (bztE) from Pseudomonas aeruginosa.